The primary structure comprises 278 residues: Elongation factor Ts (278 aa).

An involved in Mg(2+) ion dislocation from EF-Tu region spans residues 82–85 (TDFV).

This sequence belongs to the EF-Ts family.

The protein localises to the cytoplasm. Functionally, associates with the EF-Tu.GDP complex and induces the exchange of GDP to GTP. It remains bound to the aminoacyl-tRNA.EF-Tu.GTP complex up to the GTP hydrolysis stage on the ribosome. The protein is Elongation factor Ts of Streptomyces griseus subsp. griseus (strain JCM 4626 / CBS 651.72 / NBRC 13350 / KCC S-0626 / ISP 5235).